A 448-amino-acid polypeptide reads, in one-letter code: Trigger factor (448 aa).

The PPIase FKBP-type domain maps to 172 to 257 (GDRVTVDFVG…MKKIEWPHLP (86 aa)).

This sequence belongs to the FKBP-type PPIase family. Tig subfamily.

It localises to the cytoplasm. It catalyses the reaction [protein]-peptidylproline (omega=180) = [protein]-peptidylproline (omega=0). Involved in protein export. Acts as a chaperone by maintaining the newly synthesized protein in an open conformation. Functions as a peptidyl-prolyl cis-trans isomerase. This Burkholderia orbicola (strain MC0-3) protein is Trigger factor.